We begin with the raw amino-acid sequence, 106 residues long: MSESVEQHWSVYLIRNNRNALYCGVTNDIERRFKQHQLGKGAKALKGKGPLVLEWSTSFDSKVTAMRAEYFIKQLTKSKKEQLVELKALIAVDDNQQVMFESCSQS.

One can recognise a GIY-YIG domain in the interval 7-82 (QHWSVYLIRN…KQLTKSKKEQ (76 aa)).

Belongs to the UPF0213 family.

In Vibrio parahaemolyticus serotype O3:K6 (strain RIMD 2210633), this protein is UPF0213 protein VPA1222.